Reading from the N-terminus, the 90-residue chain is U7-theraphotoxin-Hhn1e (90 aa).

A signal peptide spans 1–19 (MKTAIFTVVLALAVFAVLS). A propeptide spanning residues 20–50 (FGWEANEKALSEEFTELIHEKEAASETEARE) is cleaved from the precursor. 3 disulfides stabilise this stretch: cysteine 51–cysteine 65, cysteine 58–cysteine 70, and cysteine 64–cysteine 81.

It belongs to the neurotoxin 10 (Hwtx-1) family. 13 (Hntx-13) subfamily. Expressed by the venom gland.

The protein resides in the secreted. In terms of biological role, ion channel inhibitor. This is U7-theraphotoxin-Hhn1e from Cyriopagopus hainanus (Chinese bird spider).